A 71-amino-acid chain; its full sequence is Small ribosomal subunit protein bS21 (71 aa).

Basic residues predominate over residues Glu48–Arg59. Residues Glu48 to Tyr71 form a disordered region. Basic and acidic residues predominate over residues Asn60–Tyr71.

It belongs to the bacterial ribosomal protein bS21 family.

This chain is Small ribosomal subunit protein bS21, found in Actinobacillus pleuropneumoniae serotype 5b (strain L20).